Consider the following 509-residue polypeptide: Proton-gated ion channel subunit pbo-5 (509 aa).

The N-terminal stretch at 1-21 (MTRLSILQHLLTFLILSKINA) is a signal peptide. Residues 22 to 275 (TSTTESYFDS…ISLKRRPLFY (254 aa)) lie on the Extracellular side of the membrane. A disulfide bridge links C193 with C207. Transmembrane regions (helical) follow at residues 276–296 (MVTL…GLFA), 310–330 (LGVT…EKVP), and 336–356 (VPLL…AAMT). Over 357–487 (TGIVMKVHRL…GYVRISERLD (131 aa)) the chain is Cytoplasmic. Residues 488-508 (ILFMFLFLSTVTIPVAVLFYL) form a helical membrane-spanning segment.

Belongs to the ligand-gated ion channel (TC 1.A.9) family. Acetylcholine receptor (TC 1.A.9.1) subfamily. The functional channel is a heterooligomer of pbo-5 and pbo-6. May self-associate to form homooligomers with negligible ion channel activity. In terms of tissue distribution, expressed in the posterior body muscles. Also detected in the RIFL, RIFR and RIS head neurons.

It localises to the membrane. Functionally, forms a proton-gated ion channel with pbo-6 that is activated by acidification of the posterior coelomic space, leading to posterior body wall muscle contraction (pBoc) during the defecation cycle. Probably by regulating the defecation motor program, required for fatty acid uptake by intestinal cells. Does not bind neurotransmitters such as acetylcholine, gamma-aminobutyric acid, glycine, serotonin, glutamate or choline. This chain is Proton-gated ion channel subunit pbo-5, found in Caenorhabditis elegans.